The primary structure comprises 148 residues: Holo-[acyl-carrier-protein] synthase (148 aa).

Mg(2+) is bound by residues Asp8 and Glu57.

It belongs to the P-Pant transferase superfamily. AcpS family. Mg(2+) is required as a cofactor.

It localises to the cytoplasm. It carries out the reaction apo-[ACP] + CoA = holo-[ACP] + adenosine 3',5'-bisphosphate + H(+). Transfers the 4'-phosphopantetheine moiety from coenzyme A to a Ser of acyl-carrier-protein. This Ruegeria pomeroyi (strain ATCC 700808 / DSM 15171 / DSS-3) (Silicibacter pomeroyi) protein is Holo-[acyl-carrier-protein] synthase.